The following is a 533-amino-acid chain: Non-specific phospholipase C1 (533 aa).

The signal sequence occupies residues 1–22 (MAFRRVLTTVILFCYLLISSQS).

Belongs to the bacterial phospholipase C family. As to expression, expressed in roots, leaves, stems, flowers and siliques.

It localises to the secreted. This is Non-specific phospholipase C1 (NPC1) from Arabidopsis thaliana (Mouse-ear cress).